Consider the following 99-residue polypeptide: Nucleoid-associated protein EbfC (99 aa).

This sequence belongs to the YbaB/EbfC family. Homodimer. Can form tetramers and octamers in solution.

It is found in the cytoplasm. Its subcellular location is the nucleoid. Functionally, binds to DNA and alters its conformation. May be involved in global regulation of gene expression. Binds specifically and non-specifically to DNA, preferentially to the 4 bp broken palindrome 5'-GTnAC-3'. Affects expression of a wide variety of genes, encoding both structural and metabolic proteins. The sequence is that of Nucleoid-associated protein EbfC from Borreliella burgdorferi (strain ATCC 35210 / DSM 4680 / CIP 102532 / B31) (Borrelia burgdorferi).